We begin with the raw amino-acid sequence, 90 residues long: Small ribosomal subunit protein bS20 (90 aa).

The span at 1–15 (MANHKSAQKRIRQTK) shows a compositional bias: basic residues. The disordered stretch occupies residues 1–22 (MANHKSAQKRIRQTKTRTERNR).

This sequence belongs to the bacterial ribosomal protein bS20 family.

Binds directly to 16S ribosomal RNA. The protein is Small ribosomal subunit protein bS20 of Helicobacter hepaticus (strain ATCC 51449 / 3B1).